A 943-amino-acid chain; its full sequence is Protein translocase subunit SecA (943 aa).

ATP contacts are provided by residues Gln-90, 108 to 112 (GEGKT), and Asp-509. A disordered region spans residues 535–562 (PDNEHKPPIPKQRNSKSKGGFSRKAGSN).

The protein belongs to the SecA family. As to quaternary structure, monomer and homodimer. Part of the essential Sec protein translocation apparatus which comprises SecA, SecYEG and auxiliary proteins SecDF. Other proteins may also be involved.

It localises to the cell inner membrane. The protein resides in the cellular thylakoid membrane. It is found in the cytoplasm. It carries out the reaction ATP + H2O + cellular proteinSide 1 = ADP + phosphate + cellular proteinSide 2.. In terms of biological role, part of the Sec protein translocase complex. Interacts with the SecYEG preprotein conducting channel. Has a central role in coupling the hydrolysis of ATP to the transfer of proteins into and across the cell membrane, serving as an ATP-driven molecular motor driving the stepwise translocation of polypeptide chains across the membrane. Probably participates in protein translocation into and across both the cytoplasmic and thylakoid membranes in cyanobacterial cells. This chain is Protein translocase subunit SecA, found in Prochlorococcus marinus (strain AS9601).